The primary structure comprises 157 residues: Protein-export protein SecB (157 aa).

Belongs to the SecB family. In terms of assembly, homotetramer, a dimer of dimers. One homotetramer interacts with 1 SecA dimer.

The protein localises to the cytoplasm. Its function is as follows. One of the proteins required for the normal export of preproteins out of the cell cytoplasm. It is a molecular chaperone that binds to a subset of precursor proteins, maintaining them in a translocation-competent state. It also specifically binds to its receptor SecA. In Alcanivorax borkumensis (strain ATCC 700651 / DSM 11573 / NCIMB 13689 / SK2), this protein is Protein-export protein SecB.